A 340-amino-acid polypeptide reads, in one-letter code: Ketol-acid reductoisomerase (NADP(+)) (340 aa).

The 178-residue stretch at 5-182 (MEYEKDVKVA…GSARVGLLET (178 aa)) folds into the KARI N-terminal Rossmann domain. NADP(+)-binding positions include 26-29 (YGSQ), R49, S53, and 83-86 (DEIQ). H108 is an active-site residue. G134 serves as a coordination point for NADP(+). The KARI C-terminal knotted domain maps to 183–328 (TYKEETEEDL…AELRKAMPFV (146 aa)). Mg(2+) is bound by residues D191, E195, E227, and E231. Residue S252 participates in substrate binding.

Belongs to the ketol-acid reductoisomerase family. Mg(2+) serves as cofactor.

The catalysed reaction is (2R)-2,3-dihydroxy-3-methylbutanoate + NADP(+) = (2S)-2-acetolactate + NADPH + H(+). The enzyme catalyses (2R,3R)-2,3-dihydroxy-3-methylpentanoate + NADP(+) = (S)-2-ethyl-2-hydroxy-3-oxobutanoate + NADPH + H(+). The protein operates within amino-acid biosynthesis; L-isoleucine biosynthesis; L-isoleucine from 2-oxobutanoate: step 2/4. It functions in the pathway amino-acid biosynthesis; L-valine biosynthesis; L-valine from pyruvate: step 2/4. Its function is as follows. Involved in the biosynthesis of branched-chain amino acids (BCAA). Catalyzes an alkyl-migration followed by a ketol-acid reduction of (S)-2-acetolactate (S2AL) to yield (R)-2,3-dihydroxy-isovalerate. In the isomerase reaction, S2AL is rearranged via a Mg-dependent methyl migration to produce 3-hydroxy-3-methyl-2-ketobutyrate (HMKB). In the reductase reaction, this 2-ketoacid undergoes a metal-dependent reduction by NADPH to yield (R)-2,3-dihydroxy-isovalerate. The protein is Ketol-acid reductoisomerase (NADP(+)) of Streptococcus sanguinis (strain SK36).